We begin with the raw amino-acid sequence, 324 residues long: MKPSVILYKALPDDLLQRLQEHFTVHQVANLSPQTVEQNAAIFAEAEGLLGSNENVDAALLEKMPKLRATSTISVGYDNFDVDALTARKILLMHTPTVLTETVADTLMALVLSTARRVVEVAERVKAGEWTASIGPDWYGTDVHHKTLGIVGMGRIGMALAQRAHFGFNMPILYNARRHHKEAEERFNARYCDLDTLLQESDFVCLILPLTDETYHLFGAEQFGKMKSSAIFINAGRGPVVDENALIAALQKGEIHAAGLDVFEQEPLSVDSPLLSMANVVAVPHIGSATHETRYGMAACAVDNLIDALQGKVEKNCVNPHVAD.

Residues Arg-237 and Glu-266 contribute to the active site. His-285 acts as the Proton donor in catalysis.

It belongs to the D-isomer specific 2-hydroxyacid dehydrogenase family. GhrB subfamily. In terms of assembly, homodimer.

It is found in the cytoplasm. It carries out the reaction glycolate + NADP(+) = glyoxylate + NADPH + H(+). It catalyses the reaction (R)-glycerate + NAD(+) = 3-hydroxypyruvate + NADH + H(+). The catalysed reaction is (R)-glycerate + NADP(+) = 3-hydroxypyruvate + NADPH + H(+). Its function is as follows. Catalyzes the NADPH-dependent reduction of glyoxylate and hydroxypyruvate into glycolate and glycerate, respectively. The protein is Glyoxylate/hydroxypyruvate reductase B of Escherichia coli O6:K15:H31 (strain 536 / UPEC).